The primary structure comprises 297 residues: Virulence genes transcriptional activator (297 aa).

Residues 1–61 (MDFLINKKLK…IRKNGTLIPT (61 aa)) enclose the HTH lysR-type domain. The segment at residues 21 to 40 (FSIATSVLYITRTPLSRVIS) is a DNA-binding region (H-T-H motif).

Belongs to the LysR transcriptional regulatory family.

It localises to the cytoplasm. Functionally, positive regulator for the plasmid-encoded virulence factors SpvA, SpvB, and SpvC. This Salmonella typhimurium (strain LT2 / SGSC1412 / ATCC 700720) protein is Virulence genes transcriptional activator (mkaC).